The sequence spans 236 residues: tRNA1(Val) (adenine(37)-N6)-methyltransferase (236 aa).

The protein belongs to the methyltransferase superfamily. tRNA (adenine-N(6)-)-methyltransferase family.

The protein resides in the cytoplasm. It catalyses the reaction adenosine(37) in tRNA1(Val) + S-adenosyl-L-methionine = N(6)-methyladenosine(37) in tRNA1(Val) + S-adenosyl-L-homocysteine + H(+). Specifically methylates the adenine in position 37 of tRNA(1)(Val) (anticodon cmo5UAC). The chain is tRNA1(Val) (adenine(37)-N6)-methyltransferase from Histophilus somni (strain 129Pt) (Haemophilus somnus).